Reading from the N-terminus, the 487-residue chain is Aspartyl/glutamyl-tRNA(Asn/Gln) amidotransferase subunit B (487 aa).

Belongs to the GatB/GatE family. GatB subfamily. As to quaternary structure, heterotrimer of A, B and C subunits.

It catalyses the reaction L-glutamyl-tRNA(Gln) + L-glutamine + ATP + H2O = L-glutaminyl-tRNA(Gln) + L-glutamate + ADP + phosphate + H(+). It carries out the reaction L-aspartyl-tRNA(Asn) + L-glutamine + ATP + H2O = L-asparaginyl-tRNA(Asn) + L-glutamate + ADP + phosphate + 2 H(+). In terms of biological role, allows the formation of correctly charged Asn-tRNA(Asn) or Gln-tRNA(Gln) through the transamidation of misacylated Asp-tRNA(Asn) or Glu-tRNA(Gln) in organisms which lack either or both of asparaginyl-tRNA or glutaminyl-tRNA synthetases. The reaction takes place in the presence of glutamine and ATP through an activated phospho-Asp-tRNA(Asn) or phospho-Glu-tRNA(Gln). In Chlamydia caviae (strain ATCC VR-813 / DSM 19441 / 03DC25 / GPIC) (Chlamydophila caviae), this protein is Aspartyl/glutamyl-tRNA(Asn/Gln) amidotransferase subunit B.